A 368-amino-acid polypeptide reads, in one-letter code: N-acetylneuraminate epimerase (368 aa).

The signal sequence occupies residues 1 to 19 (MNKTITALAIMMASFAANA). Kelch repeat units follow at residues 40 to 84 (TVYI…AFID), 86 to 137 (NLYV…FVHN), 139 to 173 (KAYV…KINA), 174 to 219 (HYFD…VNKG), 222 to 265 (TWLI…VAGG), 287 to 336 (ENYQ…PWNN), and 338 to 367 (LLII…VTVQ). The Proton acceptor role is filled by Glu-228.

Belongs to the NanM family. In terms of assembly, homodimer.

The protein resides in the periplasm. The enzyme catalyses N-acetyl-alpha-neuraminate = N-acetyl-beta-neuraminate. In terms of biological role, converts alpha-N-acetylneuranimic acid (Neu5Ac) to the beta-anomer, accelerating the equilibrium between the alpha- and beta-anomers. Probably facilitates sialidase-negative bacteria to compete successfully for limited amounts of extracellular Neu5Ac, which is likely taken up in the beta-anomer. In addition, the rapid removal of sialic acid from solution might be advantageous to the bacterium to damp down host responses. The protein is N-acetylneuraminate epimerase of Escherichia coli O9:H4 (strain HS).